We begin with the raw amino-acid sequence, 197 residues long: Imidazoleglycerol-phosphate dehydratase (197 aa).

Belongs to the imidazoleglycerol-phosphate dehydratase family.

The protein localises to the cytoplasm. It carries out the reaction D-erythro-1-(imidazol-4-yl)glycerol 3-phosphate = 3-(imidazol-4-yl)-2-oxopropyl phosphate + H2O. Its pathway is amino-acid biosynthesis; L-histidine biosynthesis; L-histidine from 5-phospho-alpha-D-ribose 1-diphosphate: step 6/9. This is Imidazoleglycerol-phosphate dehydratase from Syntrophobacter fumaroxidans (strain DSM 10017 / MPOB).